The chain runs to 1610 residues: NHS-like protein 1 (1610 aa).

Position 24 is a phosphoserine (Ser24). Residues 145 to 169 (SPFCDDYQDEDEETDQKCSLSSSEE) form a disordered region. Phosphoserine is present on residues Ser198 and Ser328. Polar residues predominate over residues 433-448 (TAQSAGQRESKSSGSS). Disordered regions lie at residues 433-477 (TAQS…HWNE) and 531-602 (PAHP…DAGS). Phosphoserine is present on Ser568. A compositionally biased stretch (polar residues) spans 578-594 (GYSTPTSNMSSCSLDQT). Ser639 is subject to Phosphoserine. The segment covering 649 to 667 (QKNQGDRSNYQDKSLSRNI) has biased composition (polar residues). Disordered regions lie at residues 649-693 (QKNQ…KKSS), 715-778 (SLPG…SVKS), 791-981 (TGMQ…PPPE), 997-1535 (PRPA…GEGE), and 1566-1610 (EGGL…SEES). Positions 715–730 (SLPGKSGSSPSQSPCS) are enriched in low complexity. Composition is skewed to polar residues over residues 740 to 760 (SRSQ…TPNV), 767 to 778 (TPSQSDTSSVKS), and 851 to 865 (SPSS…TPTA). Low complexity predominate over residues 895–928 (SLISSVSISSSSTSLSSSTSTEGSGTMKKLDPAV). 2 stretches are compositionally biased toward pro residues: residues 929–946 (GSPP…PFPC) and 970–981 (PHSPVFPPPPPE). The segment covering 1001–1011 (LSPILPDSPVS) has biased composition (low complexity). Residues 1012–1031 (LPLPPPLLPSSEPPPAPPLD) are compositionally biased toward pro residues. Positions 1041-1053 (PFTNSGQPESSRG) are enriched in polar residues. Ser1089 bears the Phosphoserine mark. Positions 1122 to 1153 (SRNSTNEMESESQPASVTSSLPTPAKSSSQGD) are enriched in polar residues. Position 1167 is a phosphoserine (Ser1167). Residues 1180-1193 (PSPSTTPLPDSSPS) show a composition bias toward low complexity. Ser1233 is subject to Phosphoserine. Composition is skewed to basic and acidic residues over residues 1240–1249 (GSVHSREAKE) and 1373–1383 (GRRDSDDDHSR). A phosphoserine mark is found at Ser1386 and Ser1388. Thr1392 bears the Phosphothreonine mark. Residues 1405-1422 (QVGSIQRSIRKSSTSSDN) are compositionally biased toward polar residues. The segment covering 1447 to 1460 (KNTDPRFQRSRSEP) has biased composition (basic and acidic residues). 2 stretches are compositionally biased toward low complexity: residues 1461–1474 (SPDA…CSPS) and 1504–1516 (SRTP…SRYS).

The protein belongs to the NHS family. Widely expressed. Expressed in adult and fetal brain, fetal eyes, adult lens, kidney, liver and intestine.

This is NHS-like protein 1 (NHSL1) from Homo sapiens (Human).